A 263-amino-acid chain; its full sequence is MNYLNKIRIENPLTICYTNDVVKNFTANGLLSIGASPAMSEAPEEAEEFYKVAQALLINIGTLTAQNEQDIIAIAQTANEAGLPIVFDPVAVGASTYRKQFCKLLLKSAKVSVIKGNASEILALIDDTATMKGTDSDANLDAVAIAKKAYAIYKTAIVITGKEDVIVQDNKAIVLANGSPLLARVTGAGCLLGGVIAGFLFRETEPDIEALIEAVSVFNIAAEVAAENENCGGPGTFSPLLLDTLYHLNETTYQQRIRIQEVE.

Position 39 (methionine 39) interacts with substrate. Lysine 115 and threonine 160 together coordinate ATP. Glycine 187 provides a ligand contact to substrate.

This sequence belongs to the Thz kinase family. It depends on Mg(2+) as a cofactor.

The enzyme catalyses 5-(2-hydroxyethyl)-4-methylthiazole + ATP = 4-methyl-5-(2-phosphooxyethyl)-thiazole + ADP + H(+). It participates in cofactor biosynthesis; thiamine diphosphate biosynthesis; 4-methyl-5-(2-phosphoethyl)-thiazole from 5-(2-hydroxyethyl)-4-methylthiazole: step 1/1. Catalyzes the phosphorylation of the hydroxyl group of 4-methyl-5-beta-hydroxyethylthiazole (THZ). The polypeptide is Hydroxyethylthiazole kinase (Staphylococcus aureus (strain JH9)).